The chain runs to 66 residues: UPF0434 protein Jann_0424 (66 aa).

The protein belongs to the UPF0434 family.

The protein is UPF0434 protein Jann_0424 of Jannaschia sp. (strain CCS1).